The primary structure comprises 378 residues: Succinyl-diaminopimelate desuccinylase (378 aa).

His-67 contributes to the Zn(2+) binding site. The active site involves Asp-69. Asp-100 contributes to the Zn(2+) binding site. The active-site Proton acceptor is Glu-134. Residues Glu-135, Glu-163, and His-349 each contribute to the Zn(2+) site.

Belongs to the peptidase M20A family. DapE subfamily. In terms of assembly, homodimer. Requires Zn(2+) as cofactor. Co(2+) serves as cofactor.

The enzyme catalyses N-succinyl-(2S,6S)-2,6-diaminopimelate + H2O = (2S,6S)-2,6-diaminopimelate + succinate. It functions in the pathway amino-acid biosynthesis; L-lysine biosynthesis via DAP pathway; LL-2,6-diaminopimelate from (S)-tetrahydrodipicolinate (succinylase route): step 3/3. Its function is as follows. Catalyzes the hydrolysis of N-succinyl-L,L-diaminopimelic acid (SDAP), forming succinate and LL-2,6-diaminopimelate (DAP), an intermediate involved in the bacterial biosynthesis of lysine and meso-diaminopimelic acid, an essential component of bacterial cell walls. The chain is Succinyl-diaminopimelate desuccinylase from Pasteurella multocida (strain Pm70).